Reading from the N-terminus, the 440-residue chain is Thymidine phosphorylase (440 aa).

Belongs to the thymidine/pyrimidine-nucleoside phosphorylase family. In terms of assembly, homodimer.

The catalysed reaction is thymidine + phosphate = 2-deoxy-alpha-D-ribose 1-phosphate + thymine. The protein operates within pyrimidine metabolism; dTMP biosynthesis via salvage pathway; dTMP from thymine: step 1/2. In terms of biological role, the enzymes which catalyze the reversible phosphorolysis of pyrimidine nucleosides are involved in the degradation of these compounds and in their utilization as carbon and energy sources, or in the rescue of pyrimidine bases for nucleotide synthesis. This Salmonella schwarzengrund (strain CVM19633) protein is Thymidine phosphorylase.